The sequence spans 236 residues: Probable calcium-binding protein CML30 (236 aa).

Residues 43–64 (VVVVAKKRPEEEPRRPDPDADL) are disordered. Positions 49-60 (KRPEEEPRRPDP) are enriched in basic and acidic residues. EF-hand domains are found at residues 59-94 (DPDADLGIVFSTFDHDGDGFITAAELEESLKRLGIA) and 96-131 (SSAAEAAALVARVDANSDGLIDIHEFRELYDSIPKR). Residues aspartate 72, aspartate 74, aspartate 76, glutamate 83, aspartate 109, asparagine 111, aspartate 113, and glutamate 120 each coordinate Ca(2+). The interval 130 to 158 (KRRKSHQQHPLPSTAAADEEAAAADEEYE) is disordered. Positions 146–158 (ADEEAAAADEEYE) are enriched in acidic residues. EF-hand domains follow at residues 161 to 196 (EEERDLREAFDVFDGNKDGLISAEELGTVLESLGLR) and 202 to 236 (PAVAECRDMIRLVDSDGDGMVSFEEFKRMMTVVKA). Ca(2+) contacts are provided by aspartate 174, asparagine 176, aspartate 178, glutamate 185, aspartate 215, aspartate 217, aspartate 219, methionine 221, and glutamate 226.

Its function is as follows. Potential calcium sensor. This is Probable calcium-binding protein CML30 (CML30) from Oryza sativa subsp. japonica (Rice).